The primary structure comprises 83 residues: Sulfur carrier protein TusA (83 aa).

Catalysis depends on cysteine 20, which acts as the Cysteine persulfide intermediate.

It belongs to the sulfur carrier protein TusA family.

It is found in the cytoplasm. Its function is as follows. Sulfur carrier protein which probably makes part of a sulfur-relay system. The protein is Sulfur carrier protein TusA of Pseudoalteromonas atlantica (strain T6c / ATCC BAA-1087).